We begin with the raw amino-acid sequence, 417 residues long: Glucose-1-phosphate adenylyltransferase (417 aa).

Alpha-D-glucose 1-phosphate contacts are provided by residues tyrosine 98, glycine 163, 178–179, and serine 197; that span reads EK.

The protein belongs to the bacterial/plant glucose-1-phosphate adenylyltransferase family. As to quaternary structure, homotetramer.

The catalysed reaction is alpha-D-glucose 1-phosphate + ATP + H(+) = ADP-alpha-D-glucose + diphosphate. It functions in the pathway glycan biosynthesis; glycogen biosynthesis. Functionally, involved in the biosynthesis of ADP-glucose, a building block required for the elongation reactions to produce glycogen. Catalyzes the reaction between ATP and alpha-D-glucose 1-phosphate (G1P) to produce pyrophosphate and ADP-Glc. The sequence is that of Glucose-1-phosphate adenylyltransferase from Koribacter versatilis (strain Ellin345).